The primary structure comprises 396 residues: NDP-glycosyltransferase YjiC (396 aa).

UDP contacts are provided by residues asparagine 18, threonine 234, valine 283, histidine 298, and 302–306 (NSTME).

It belongs to the UDP-glycosyltransferase family.

It catalyses the reaction an NDP-glycose + an acceptor = a glycosylated acceptor + NDP.. In terms of biological role, glycosyltransferase that can glycosylate a wide range of substrates, including various flavonoids (flavones, flavonols, flavanones, flavanols, chalcones), isoflavonoids and stilbenes, to produce multiple glycosylated products. It can accept diverse nucleotide diphosphate-D/L-sugars as donors, including ADP-, GDP-, CDP-, TDP- or UDP-alpha-D-glucose, and catalyzes O-, N-, or S-glycosylation. In vitro, catalyzes the glycosylation of, among others, apigenin, 3-hydroxyflavone, phloretin or resveratrol, resulting in multiple glucosylated products, along with mono-, di-, tri- and tetraglucosides. Can also catalyze the glycosylation of the macrolide epothilone A with diverse NDP-D/L-sugars, forming different epothilone A glycoside derivatives. The sequence is that of NDP-glycosyltransferase YjiC from Bacillus licheniformis (strain ATCC 14580 / DSM 13 / JCM 2505 / CCUG 7422 / NBRC 12200 / NCIMB 9375 / NCTC 10341 / NRRL NRS-1264 / Gibson 46).